Here is an 83-residue protein sequence, read N- to C-terminus: Small ribosomal subunit protein bS20 (83 aa).

This sequence belongs to the bacterial ribosomal protein bS20 family.

In terms of biological role, binds directly to 16S ribosomal RNA. In Flavobacterium psychrophilum (strain ATCC 49511 / DSM 21280 / CIP 103535 / JIP02/86), this protein is Small ribosomal subunit protein bS20.